We begin with the raw amino-acid sequence, 432 residues long: Testis-specific Y-encoded-like protein 1 (432 aa).

Disordered stretches follow at residues 1–31 (MSGR…PDPS), 54–110 (ALPP…LETA), and 116–135 (TDDS…LSRE). Residue lysine 160 forms a Glycyl lysine isopeptide (Lys-Gly) (interchain with G-Cter in SUMO2) linkage.

It belongs to the nucleosome assembly protein (NAP) family. In terms of processing, ubiquitinated by the CRL2(APPBP2) complex, which recognizes the Arg-Xaa-Xaa-Gly sequence at the C-terminus, leading to its degradation.

Its subcellular location is the nucleus. The protein resides in the nucleolus. This chain is Testis-specific Y-encoded-like protein 1 (TSPYL1), found in Bos taurus (Bovine).